A 448-amino-acid chain; its full sequence is MRLSDLRGRKVAVWGTGREGRAAVVAIAAHGPADLVAVDDGGSTVSPPWDGFLATAAPLVTGDAGAQRLAAADVVVRSPGVPNTHPWLAELWRRQVPVTQGTALWMADHAARTVGVTGSKGKSTTSSLISHLLAAVDQPNVFGGNIGVPTLDLPAADLYVLELSSYQCSDLTDSPRVAVVTALFPEHLDAHGGEREYYRDKLNLLAHGPETVVVNGADPRLAAELGDRPVVRAGTPDTTHVAGGPDGTPWFHLGDQPLFPRAVLPLVGRHNEGNLCVALAVLDVLGVDVLARRDTLAVAVAGFQGLAHRLTEIVDPSGLTFVDDTLATSPYAAMHAIDAYDGRALTVIVGGADRGLDYTPLRDHLAEREITVIGVPDSGARIVAALDGLPKVRCDVTGDLVEAVRLARRVTPAGGVVLLSPAAPSYGQFRNFEHRSEVFAQAVRDTAG.

118-124 serves as a coordination point for ATP; sequence GSKGKST.

The protein belongs to the MurCDEF family. MurD2 subfamily.

The protein localises to the cytoplasm. It carries out the reaction UDP-N-acetyl-alpha-D-muramoyl-L-alanine + L-glutamate + ATP = UDP-N-acetyl-alpha-D-muramoyl-L-alanyl-L-glutamate + ADP + phosphate + H(+). It participates in cell wall biogenesis; peptidoglycan biosynthesis. Functionally, cell wall formation. Catalyzes the addition of L-glutamate to the nucleotide precursor UDP-N-acetylmuramoyl-L-alanine. In Salinispora tropica (strain ATCC BAA-916 / DSM 44818 / JCM 13857 / NBRC 105044 / CNB-440), this protein is UDP-N-acetylmuramoyl-L-alanine--L-glutamate ligase.